The chain runs to 349 residues: Ion-translocating oxidoreductase complex subunit D (349 aa).

3 helical membrane passes run 20–42 (VMQR…FGWG), 77–99 (SAML…WMIV), and 124–144 (AMAA…TWIA). Thr-185 is modified (FMN phosphoryl threonine). The next 5 membrane-spanning stretches (helical) occupy residues 212 to 232 (STGV…LVLL), 239 to 259 (WHIS…GFLL), 265 to 285 (ASPL…FIAT), 291 to 311 (ATSS…VYII), and 315 to 335 (GGYP…APFI).

This sequence belongs to the NqrB/RnfD family. The complex is composed of six subunits: RnfA, RnfB, RnfC, RnfD, RnfE and RnfG. FMN serves as cofactor.

It localises to the cell inner membrane. Its function is as follows. Part of a membrane-bound complex that couples electron transfer with translocation of ions across the membrane. The chain is Ion-translocating oxidoreductase complex subunit D from Shewanella baltica (strain OS223).